Reading from the N-terminus, the 305-residue chain is L-lactate dehydrogenase (305 aa).

Residues valine 11, aspartate 32, lysine 37, and 76–77 (GV) each bind NAD(+). Substrate contacts are provided by residues glutamine 79, arginine 85, and 117 to 120 (NPVD). NAD(+) is bound by residues 115–117 (ATN) and serine 140. Residue 145-148 (DTAR) coordinates substrate. Arginine 150 and histidine 165 together coordinate beta-D-fructose 1,6-bisphosphate. Histidine 172 serves as the catalytic Proton acceptor. Phosphotyrosine is present on tyrosine 218. Threonine 227 contacts substrate.

The protein belongs to the LDH/MDH superfamily. LDH family. As to quaternary structure, homotetramer.

It is found in the cytoplasm. It carries out the reaction (S)-lactate + NAD(+) = pyruvate + NADH + H(+). Its pathway is fermentation; pyruvate fermentation to lactate; (S)-lactate from pyruvate: step 1/1. With respect to regulation, allosterically activated by fructose 1,6-bisphosphate (FBP). Catalyzes the conversion of lactate to pyruvate. In Chloroherpeton thalassium (strain ATCC 35110 / GB-78), this protein is L-lactate dehydrogenase.